The following is a 59-amino-acid chain: Cecropin-A (59 aa).

A signal peptide spans 1-23 (MNFNKLFVIVLLAALAFFGQAEA). Leucine amide is present on L57.

It belongs to the cecropin family.

The protein localises to the secreted. Cecropins have lytic and antibacterial activity against several Gram-positive and Gram-negative bacteria. This chain is Cecropin-A (CECA), found in Culex pipiens pipiens (Northern house mosquito).